A 660-amino-acid chain; its full sequence is E3 ubiquitin-protein ligase ORTHRUS 3 (660 aa).

A PHD-type zinc finger spans residues 12 to 63 (EGVCMRCKSMPPPEESLTCGTCVTPWHVSCLLSPPETLSATLQWLCPDCSGE). The tract at residues 107-129 (QLLSGKGVVDEDDEEEKKKTSKG) is disordered. The RING-type 1 zinc-finger motif lies at 141-197 (CSFCMQSLQKPVSVRVLFALALMLVWFLESTPCGHNACLKCFLKWMGQGHRSCGTCR). Residues 285 to 434 (VRNQGLLVGE…CRFLFVRCDN (150 aa)) enclose the YDG domain. Residues 528-585 (CQICQKVMTNPVTTPCAHNFCKACLESKFAGTALVRERGSGGRKLRSQKSVMKCPCCP) form an RING-type 2 zinc finger. Residues 593–622 (QNPQVNREVAEVIEKLKKQEEEENAKSLDE) are a coiled coil. Composition is skewed to basic and acidic residues over residues 610 to 621 (KQEEEENAKSLD) and 637 to 646 (QPKKRIKLDT). The tract at residues 610–660 (KQEEEENAKSLDEGQCSGTSHEEEDDEQPKKRIKLDTDAEVSATVVESDMK) is disordered.

The protein resides in the nucleus. It catalyses the reaction S-ubiquitinyl-[E2 ubiquitin-conjugating enzyme]-L-cysteine + [acceptor protein]-L-lysine = [E2 ubiquitin-conjugating enzyme]-L-cysteine + N(6)-ubiquitinyl-[acceptor protein]-L-lysine.. The protein operates within protein modification; protein ubiquitination. Functionally, E3 ubiquitin-protein ligase. May participate in CpG methylation-dependent transcriptional regulation. The protein is E3 ubiquitin-protein ligase ORTHRUS 3 (ORTH3) of Arabidopsis thaliana (Mouse-ear cress).